Here is a 525-residue protein sequence, read N- to C-terminus: GMP synthase [glutamine-hydrolyzing] (525 aa).

Positions 9–207 (RILILDFGSQ…ILDICGCEAL (199 aa)) constitute a Glutamine amidotransferase type-1 domain. C86 serves as the catalytic Nucleophile. Active-site residues include H181 and E183. The region spanning 208-400 (WTPSKIAEDA…LGLPYDMVYR (193 aa)) is the GMPS ATP-PPase domain. ATP is bound at residue 235-241 (SGGVDSS).

In terms of assembly, homodimer.

It catalyses the reaction XMP + L-glutamine + ATP + H2O = GMP + L-glutamate + AMP + diphosphate + 2 H(+). Its pathway is purine metabolism; GMP biosynthesis; GMP from XMP (L-Gln route): step 1/1. Its function is as follows. Catalyzes the synthesis of GMP from XMP. The sequence is that of GMP synthase [glutamine-hydrolyzing] from Pseudomonas syringae pv. syringae (strain B728a).